A 579-amino-acid polypeptide reads, in one-letter code: Isocitrate dehydrogenase kinase/phosphatase (579 aa).

Residues 324-330 (ADGTPGM) and K345 each bind ATP. D380 is an active-site residue.

Belongs to the AceK family.

It localises to the cytoplasm. The enzyme catalyses L-seryl-[isocitrate dehydrogenase] + ATP = O-phospho-L-seryl-[isocitrate dehydrogenase] + ADP + H(+). Bifunctional enzyme which can phosphorylate or dephosphorylate isocitrate dehydrogenase (IDH) on a specific serine residue. This is a regulatory mechanism which enables bacteria to bypass the Krebs cycle via the glyoxylate shunt in response to the source of carbon. When bacteria are grown on glucose, IDH is fully active and unphosphorylated, but when grown on acetate or ethanol, the activity of IDH declines drastically concomitant with its phosphorylation. The sequence is that of Isocitrate dehydrogenase kinase/phosphatase from Xanthomonas euvesicatoria pv. vesicatoria (strain 85-10) (Xanthomonas campestris pv. vesicatoria).